The primary structure comprises 878 residues: AP-5 complex subunit beta-1 (878 aa).

Residues 234–260 (RLQPQAPSWPAAEEGEGERSLTAREHS) form a disordered region. Basic and acidic residues predominate over residues 250–260 (GERSLTAREHS).

Probably part of the adaptor protein complex 5 (AP-5), a tetramer composed of AP5B1, AP5M1, AP5S1 and AP5Z1. Interacts with ZFYVE26 and SPG11.

Functionally, as part of AP-5, a probable fifth adaptor protein complex it may be involved in endosomal transport. In Homo sapiens (Human), this protein is AP-5 complex subunit beta-1 (AP5B1).